The primary structure comprises 447 residues: Tubulin beta-5 chain (447 aa).

GTP is bound by residues Q11, E69, S138, G142, T143, G144, N204, and N226. Mg(2+) is bound at residue E69. Positions 421 to 447 are disordered; that stretch reads EYQQYQDATADDEEEDYGDEEEDEVAA. Positions 429–447 are enriched in acidic residues; the sequence is TADDEEEDYGDEEEDEVAA.

It belongs to the tubulin family. Dimer of alpha and beta chains. A typical microtubule is a hollow water-filled tube with an outer diameter of 25 nm and an inner diameter of 15 nM. Alpha-beta heterodimers associate head-to-tail to form protofilaments running lengthwise along the microtubule wall with the beta-tubulin subunit facing the microtubule plus end conferring a structural polarity. Microtubules usually have 13 protofilaments but different protofilament numbers can be found in some organisms and specialized cells. Requires Mg(2+) as cofactor. As to expression, expressed in roots, leaf sheaths, and suspension cultured cells.

The protein localises to the cytoplasm. It localises to the cytoskeleton. In terms of biological role, tubulin is the major constituent of microtubules, a cylinder consisting of laterally associated linear protofilaments composed of alpha- and beta-tubulin heterodimers. Microtubules grow by the addition of GTP-tubulin dimers to the microtubule end, where a stabilizing cap forms. Below the cap, tubulin dimers are in GDP-bound state, owing to GTPase activity of alpha-tubulin. This Oryza sativa subsp. japonica (Rice) protein is Tubulin beta-5 chain (TUBB5).